A 208-amino-acid chain; its full sequence is Nascent polypeptide-associated complex subunit alpha (208 aa).

Residues 1 to 19 (MSSSRIEELPDDDVPKTTV) show a composition bias toward basic and acidic residues. 2 disordered regions span residues 1–50 (MSSS…HSRN) and 120–166 (QLAA…VFDA). Residues 21 to 34 (DAADSSESEVEGAE) show a composition bias toward acidic residues. Residues 48–113 (SRNEKKARKA…AKIEDLNSQA (66 aa)) enclose the NAC-A/B domain. Residues 120 to 131 (QLAAAEAAGSNE) are compositionally biased toward low complexity. Positions 132-154 (HAGHDHASHDHGKGKAVESADKK) are enriched in basic and acidic residues. Residues 155–164 (DEEEDDEEVF) show a composition bias toward acidic residues. A UBA domain is found at 169-208 (LEAKDIELVMAQASVSRNKAIKALKENDNDIVNSIMALSV).

Belongs to the NAC-alpha family. Part of the nascent polypeptide-associated complex (NAC), consisting of EGD2 and EGD1. NAC associates with ribosomes via EGD1.

Its subcellular location is the cytoplasm. It is found in the nucleus. Component of the nascent polypeptide-associated complex (NAC), a dynamic component of the ribosomal exit tunnel, protecting the emerging polypeptides from interaction with other cytoplasmic proteins to ensure appropriate nascent protein targeting. The NAC complex also promotes mitochondrial protein import by enhancing productive ribosome interactions with the outer mitochondrial membrane and blocks the inappropriate interaction of ribosomes translating non-secretory nascent polypeptides with translocation sites in the membrane of the endoplasmic reticulum. EGD2 may also be involved in transcription regulation. This is Nascent polypeptide-associated complex subunit alpha (EGD2) from Ajellomyces capsulatus (strain NAm1 / WU24) (Darling's disease fungus).